We begin with the raw amino-acid sequence, 614 residues long: V-type proton ATPase catalytic subunit A (614 aa).

Residue 247–254 (GAFGCGKT) coordinates ATP.

The protein belongs to the ATPase alpha/beta chains family. V-ATPase is a heteromultimeric enzyme made up of two complexes: the ATP-hydrolytic V1 complex and the proton translocation V0 complex. The V1 complex consists of three catalytic AB heterodimers that form a heterohexamer, three peripheral stalks each consisting of EG heterodimers, one central rotor including subunits D and F, and the regulatory subunits C and H. The proton translocation complex V0 consists of the proton transport subunit a, a ring of proteolipid subunits c9c'', rotary subunit d, subunits e and f, and the accessory subunits VhaAC45 and ATP6AP2.

It catalyses the reaction ATP + H2O + 4 H(+)(in) = ADP + phosphate + 5 H(+)(out). ATP hydrolysis occurs at the interface between the nucleotide-binding domains of subunits A and B. ATP hydrolysis triggers a conformational change in the subunits D and F, which induces a shift of subunit d. The c-ring is subsequently rotated and results in a continuous proton translocation across the membrane. In terms of biological role, catalytic subunit of the V1 complex of vacuolar(H+)-ATPase (V-ATPase), a multisubunit enzyme composed of a peripheral complex (V1) that hydrolyzes ATP and a membrane integral complex (V0) that translocates protons. V-ATPase is responsible for acidifying and maintaining the pH of intracellular compartments and in some cell types, is targeted to the plasma membrane, where it is responsible for acidifying the extracellular environment. In Anopheles gambiae (African malaria mosquito), this protein is V-type proton ATPase catalytic subunit A.